Consider the following 943-residue polypeptide: UvrABC system protein A (943 aa).

An ATP-binding site is contributed by 32-39 (GLSGSGKS). The C4-type zinc finger occupies 251 to 278 (CPVCGFTVPELEPRLFSFNAPFGSCSEC). ABC transporter domains are found at residues 308–589 (WNPI…SKSI) and 609–937 (GNGR…HYLK). Position 641–648 (641–648 (GVSGSGKS)) interacts with ATP. Residues 740-766 (CEACSGDGIIKIEMHFLPDVYVACEVC) form a C4-type zinc finger.

Belongs to the ABC transporter superfamily. UvrA family. Forms a heterotetramer with UvrB during the search for lesions.

The protein resides in the cytoplasm. The UvrABC repair system catalyzes the recognition and processing of DNA lesions. UvrA is an ATPase and a DNA-binding protein. A damage recognition complex composed of 2 UvrA and 2 UvrB subunits scans DNA for abnormalities. When the presence of a lesion has been verified by UvrB, the UvrA molecules dissociate. The chain is UvrABC system protein A from Streptococcus pneumoniae serotype 4 (strain ATCC BAA-334 / TIGR4).